The following is a 189-amino-acid chain: dCTP deaminase (189 aa).

Residues 112–117, 136–138, Gln157, Tyr171, and Gln181 contribute to the dCTP site; these read KSTYAR and TLE. Glu138 (proton donor/acceptor) is an active-site residue.

It belongs to the dCTP deaminase family. As to quaternary structure, homotrimer.

The catalysed reaction is dCTP + H2O + H(+) = dUTP + NH4(+). The protein operates within pyrimidine metabolism; dUMP biosynthesis; dUMP from dCTP (dUTP route): step 1/2. Catalyzes the deamination of dCTP to dUTP. This is dCTP deaminase from Paraburkholderia xenovorans (strain LB400).